Consider the following 246-residue polypeptide: Ribonuclease 3 (246 aa).

Residues 18-147 (FQELQNKIGI…FIGALYLDQG (130 aa)) enclose the RNase III domain. E60 serves as a coordination point for Mg(2+). Residue D64 is part of the active site. Mg(2+) contacts are provided by D133 and E136. Residue E136 is part of the active site. The region spanning 173–242 (DFKSQLQELV…AQMALETLRA (70 aa)) is the DRBM domain.

It belongs to the ribonuclease III family. As to quaternary structure, homodimer. Mg(2+) is required as a cofactor.

It localises to the cytoplasm. It catalyses the reaction Endonucleolytic cleavage to 5'-phosphomonoester.. Functionally, digests double-stranded RNA. Involved in the processing of primary rRNA transcript to yield the immediate precursors to the large and small rRNAs (23S and 16S). Processes some mRNAs, and tRNAs when they are encoded in the rRNA operon. Processes pre-crRNA and tracrRNA of type II CRISPR loci if present in the organism. The sequence is that of Ribonuclease 3 from Geobacillus kaustophilus (strain HTA426).